The following is a 256-amino-acid chain: Calsenilin (256 aa).

Positions 1–30 (MQRAKEVMKVSDGSLLGEPGRTPLSKKEGV) are disordered. Position 14 is a phosphoserine (Ser-14). Residue Lys-26 forms a Glycyl lysine isopeptide (Lys-Gly) (interchain with G-Cter in SUMO1) linkage. Residues Cys-45 and Cys-46 are each lipidated (S-palmitoyl cysteine). Phosphoserine occurs at positions 60 and 63. Residues 67-123 (LELSAVRHQPEGLDQLQAQTKFTKKELQSLYRGFKNECPTGLVDEDTFKLIYSQFFP) enclose the EF-hand 1; degenerate domain. Lys-90 is covalently cross-linked (Glycyl lysine isopeptide (Lys-Gly) (interchain with G-Cter in SUMO1)). EF-hand domains follow at residues 126 to 161 (DATTYAHFLFNAFDADGNGAIRFEDFVVGLSILLRG), 162 to 197 (TVHEKLKWAFNLYDINKDGYITKEEMLAIMKSIYDM), and 210 to 245 (APLEHVERFFQKMDRNQDGVVTIDEFLETCQKDENI). Positions 175, 177, 179, 181, 186, 223, 225, 227, and 234 each coordinate Ca(2+). An interaction with KCND2 region spans residues 243–256 (ENIMSSMQLFENVI).

The protein belongs to the recoverin family. Binds to DNA as a homomultimer. Dimerization is induced by binding to calcium. Interacts with the C-terminus of PSEN1 and PSEN2 and with PSEN2 CTF subunit. Associates with KCN1. Component of heteromultimeric potassium channels. Identified in potassium channel complexes containing KCND1, KCND2, KCND3, KCNIP1, KCNIP2, KCNIP3, KCNIP4, DPP6 and DPP10. Interacts with KCND2 and KCND3. Post-translationally, palmitoylated. Palmitoylation enhances association with the plasma membrane. Proteolytically cleaved by caspase-3.

Its subcellular location is the cytoplasm. It is found in the cell membrane. The protein resides in the endoplasmic reticulum. It localises to the golgi apparatus. The protein localises to the nucleus. Functionally, regulatory subunit of Kv4/D (Shal)-type voltage-gated rapidly inactivating A-type potassium channels, such as KCND2/Kv4.2 and KCND3/Kv4.3. Modulates channel expression at the cell membrane, gating characteristics, inactivation kinetics and rate of recovery from inactivation in a calcium-dependent and isoform-specific manner. Its function is as follows. May play a role in the regulation of PSEN2 proteolytic processing and apoptosis. Together with PSEN2 involved in modulation of amyloid-beta formation. Calcium-dependent transcriptional repressor that binds to the DRE element of genes including PDYN and FOS. Affinity for DNA is reduced upon binding to calcium and enhanced by binding to magnesium. Seems to be involved in nociception. This Bos taurus (Bovine) protein is Calsenilin (KCNIP3).